The chain runs to 337 residues: MVREDVVGSTRTLQWKCVESRVDSKRLYYGRFVLSPLMKGQADTIGIAIRRALLGEIEGTCITRATSENVLHEYSTIAGIEESVHEILLNLKDIVLRSNLYGVRNASICVRGPKYITAQDIISPPSVEIVDTTQHIANLTEPINLCIELQIKRDRGYRMKSTNDSHDGSYPIDIVSMPVRNANHSIHSYGNGNEKQEILFIEIWTNGSLTPKEALYEASRNLIDLLIPFLHAEEEDMNFKENENRWNLPPFSFQDKFTNFKKNKKGIPLTCIFIDQSELSSRTYNCLKRSNIHTLLDLLSHSQEDLMKMEYFRTEDVKQILSTVQKHFAINLLNKKL.

The segment at 1–233 (MVREDVVGST…DLLIPFLHAE (233 aa)) is alpha N-terminal domain (alpha-NTD). The tract at residues 265-337 (KGIPLTCIFI…FAINLLNKKL (73 aa)) is alpha C-terminal domain (alpha-CTD).

This sequence belongs to the RNA polymerase alpha chain family. As to quaternary structure, in plastids the minimal PEP RNA polymerase catalytic core is composed of four subunits: alpha, beta, beta', and beta''. When a (nuclear-encoded) sigma factor is associated with the core the holoenzyme is formed, which can initiate transcription.

The protein resides in the plastid. It localises to the chloroplast. It catalyses the reaction RNA(n) + a ribonucleoside 5'-triphosphate = RNA(n+1) + diphosphate. In terms of biological role, DNA-dependent RNA polymerase catalyzes the transcription of DNA into RNA using the four ribonucleoside triphosphates as substrates. This is DNA-directed RNA polymerase subunit alpha from Phalaenopsis aphrodite subsp. formosana (Moth orchid).